The chain runs to 608 residues: 2',5'-phosphodiesterase 12 (608 aa).

Residues 1-16 constitute a mitochondrion transit peptide; it reads MWRLPGRAALRGVRSV. Positions 91-111 are disordered; the sequence is AKKSRKNRAHSSGGAACAATG. A compositionally biased stretch (low complexity) spans 100 to 111; the sequence is HSSGGAACAATG. Residue Ser216 is modified to Phosphoserine. Positions 350, 495, and 497 each coordinate Mg(2+). Catalysis depends on Asp495, which acts as the Proton donor/acceptor.

It belongs to the CCR4/nocturin family. The cofactor is Mg(2+).

It is found in the mitochondrion matrix. The enzyme catalyses Exonucleolytic cleavage of poly(A) to 5'-AMP.. Enzyme that cleaves 2',5'-phosphodiester bond linking adenosines of the 5'-triphosphorylated oligoadenylates, triphosphorylated oligoadenylates referred as 2-5A modulates the 2-5A system. Degrades triphosphorylated 2-5A to produce AMP and ATP. Also cleaves 3',5'-phosphodiester bond of oligoadenylates. Plays a role as a negative regulator of the 2-5A system that is one of the major pathways for antiviral and antitumor functions induced by interferons (IFNs). Suppression of this enzyme increases cellular 2-5A levels and decreases viral replication in cultured small-airway epithelial cells. This Rattus norvegicus (Rat) protein is 2',5'-phosphodiesterase 12 (Pde12).